The following is a 222-amino-acid chain: Interleukin-12 subunit alpha (222 aa).

The first 25 residues, 1-25 (MCPLRSLFLMATLVFLNHLDHLSLA), serve as a signal peptide directing secretion. 3 disulfides stabilise this stretch: C40-C113, C67-C199, and C88-C126. N-linked (GlcNAc...) asparagine glycosylation is found at N96 and N174.

It belongs to the IL-6 superfamily. Heterodimer with IL12B; disulfide-linked. This heterodimer is known as interleukin IL-12. Heterodimer with EBI3/IL27B; not disulfide-linked. This heterodimer is known as interleukin IL-35. Interacts with NBR1; this interaction promotes IL-12 secretion.

The protein localises to the secreted. Its function is as follows. Heterodimerizes with IL12B to form the IL-12 cytokine or with EBI3/IL27B to form the IL-35 cytokine. IL-12 is primarily produced by professional antigen-presenting cells (APCs) such as B-cells and dendritic cells (DCs) as well as macrophages and granulocytes and regulates T-cell and natural killer-cell responses, induces the production of interferon-gamma (IFN-gamma), favors the differentiation of T-helper 1 (Th1) cells and is an important link between innate resistance and adaptive immunity. Mechanistically, exerts its biological effects through a receptor composed of IL12R1 and IL12R2 subunits. Binding to the receptor results in the rapid tyrosine phosphorylation of a number of cellular substrates including the JAK family kinases TYK2 and JAK2. In turn, recruited STAT4 gets phosphorylated and translocates to the nucleus where it regulates cytokine/growth factor responsive genes. As part of IL-35, plays essential roles in maintaining the immune homeostasis of the liver microenvironment and also functions as an immune-suppressive cytokine. Mediates biological events through unconventional receptors composed of IL12RB2 and gp130/IL6ST heterodimers or homodimers. Signaling requires the transcription factors STAT1 and STAT4, which form a unique heterodimer that binds to distinct DNA sites. The chain is Interleukin-12 subunit alpha (IL12A) from Lama glama (Llama).